The chain runs to 644 residues: Protein lin-9 (644 aa).

Positions 1 to 77 (MSSAVRSPRK…GRDSPSVNSL (77 aa)) are disordered. Positions 50–62 (SIKRTGSPKKSPA) are enriched in basic residues.

It belongs to the lin-9 family. As to quaternary structure, component of the DRM complex, at least composed of lin-9, lin-35, lin-37, lin-52, lin-53, lin-54- dpl-1 and efl-1. Interacts with zft-11; the interaction is required to suppress the activation of non-neuronal genes in neurons.

The protein resides in the nucleus. Its function is as follows. Synthetic multivulva class B (synMuvB) protein. SynMuvB proteins are required to repress the induction of vulval development by Ras signaling and probably act by forming the multiprotein DRM complex that represses transcription. Required for the development of sheath cells in the hermaphrodite gonad and for the development of the male spicule, rays and gonad. In association with the zinc finger protein ztf-11, negatively regulates the expression of non-neuronal genes during neurogenesis. The protein is Protein lin-9 of Caenorhabditis elegans.